Reading from the N-terminus, the 358-residue chain is tRNA pseudouridine synthase D (358 aa).

Catalysis depends on aspartate 84, which acts as the Nucleophile. The 152-residue stretch at glycine 161–aspartate 312 folds into the TRUD domain.

This sequence belongs to the pseudouridine synthase TruD family.

The enzyme catalyses uridine(13) in tRNA = pseudouridine(13) in tRNA. Its function is as follows. Responsible for synthesis of pseudouridine from uracil-13 in transfer RNAs. The sequence is that of tRNA pseudouridine synthase D from Nitrosococcus oceani (strain ATCC 19707 / BCRC 17464 / JCM 30415 / NCIMB 11848 / C-107).